The chain runs to 173 residues: Ribosome maturation factor RimM (173 aa).

One can recognise a PRC barrel domain in the interval 95–169; sequence EGSYYFKDIL…RIEVTLLEGL (75 aa).

The protein belongs to the RimM family. In terms of assembly, binds ribosomal protein uS19.

The protein localises to the cytoplasm. In terms of biological role, an accessory protein needed during the final step in the assembly of 30S ribosomal subunit, possibly for assembly of the head region. Essential for efficient processing of 16S rRNA. May be needed both before and after RbfA during the maturation of 16S rRNA. It has affinity for free ribosomal 30S subunits but not for 70S ribosomes. This Lactobacillus gasseri (strain ATCC 33323 / DSM 20243 / BCRC 14619 / CIP 102991 / JCM 1131 / KCTC 3163 / NCIMB 11718 / NCTC 13722 / AM63) protein is Ribosome maturation factor RimM.